Here is a 77-residue protein sequence, read N- to C-terminus: Small ribosomal subunit protein bS21 (77 aa).

The span at Lys38 to Arg52 shows a compositional bias: basic and acidic residues. The disordered stretch occupies residues Lys38 to Lys77. The span at Arg53–Ala62 shows a compositional bias: basic residues.

It belongs to the bacterial ribosomal protein bS21 family.

The chain is Small ribosomal subunit protein bS21 from Bartonella henselae (strain ATCC 49882 / DSM 28221 / CCUG 30454 / Houston 1) (Rochalimaea henselae).